Reading from the N-terminus, the 230-residue chain is Oxygen-evolving enhancer protein 3-2, chloroplastic (230 aa).

Residues Met1–Ala49 constitute a chloroplast transit peptide. Residues Gln50 to Ala82 constitute a thylakoid transit peptide. Ser125 is modified (phosphoserine). Residue Thr195 is modified to Phosphothreonine. At Tyr215 the chain carries Phosphotyrosine. At Ser216 the chain carries Phosphoserine. Phosphothreonine is present on Thr218.

This sequence belongs to the PsbQ family.

It localises to the plastid. Its subcellular location is the chloroplast thylakoid membrane. In terms of biological role, required for photosystem II assembly/stability and photoautotrophic growth under low light conditions. In Arabidopsis thaliana (Mouse-ear cress), this protein is Oxygen-evolving enhancer protein 3-2, chloroplastic (PSBQ2).